The primary structure comprises 416 residues: E3 ubiquitin-protein ligase DMA1 (416 aa).

Positions 1–30 are disordered; the sequence is MSTNTVPSSPPNQTPPAASGIATSHDHTKF. Glycyl lysine isopeptide (Lys-Gly) (interchain with G-Cter in ubiquitin) cross-links involve residues Lys-150, Lys-204, Lys-217, Lys-237, Lys-240, Lys-260, Lys-300, Lys-306, Lys-313, and Lys-317. Residues 189–252 form the FHA domain; it reads IIIGRYTERV…SGTFLNHQRL (64 aa). An RING-type zinc finger spans residues 327-371; the sequence is CSICLNKIKPCQAIFISPCAHSWHFHCVRRLVIMNYPQFMCPNCR.

It belongs to the DMA1 family. As to quaternary structure, interacts with CDC123. Interacts with PCL1. UBC4-dependent autoubiquitination occurs at Lys-150, Lys-204, Lys-217, Lys-237, Lys-240, Lys-260, Lys-300, Lys-306, Lys-313 and Lys-317. UBC4-dependent autoubiquitination is responsible for DMA2 turnover. UBC13/MMS2-dependent autoubiquitination occurs at Lys-237 and Lys-306. Lys-204 and Lys-306 are also ubiquitinated in trans by DMA2 E3 ligase in association with UBC4.

The protein localises to the cytoplasm. The catalysed reaction is S-ubiquitinyl-[E2 ubiquitin-conjugating enzyme]-L-cysteine + [acceptor protein]-L-lysine = [E2 ubiquitin-conjugating enzyme]-L-cysteine + N(6)-ubiquitinyl-[acceptor protein]-L-lysine.. Its function is as follows. E3 ubiquitin-protein ligase which functions in cell cycle retarding in conjunction with the UBC4 and UBC13/MMS2 complex, 2 E2 ubiquitin conjugating enzymes. Involved in nutritional control of the cell cycle. Targets the G1 cyclin PCL1 for destruction. Required for proper spindle positioning, likely regulating septin ring deposition at the bud neck. This chain is E3 ubiquitin-protein ligase DMA1, found in Saccharomyces cerevisiae (strain ATCC 204508 / S288c) (Baker's yeast).